Here is a 366-residue protein sequence, read N- to C-terminus: Erythronate-4-phosphate dehydrogenase (366 aa).

2 residues coordinate substrate: Ser-46 and Thr-67. The NAD(+) site is built by Asp-147 and Thr-175. The active site involves Arg-208. Asp-228 is an NAD(+) binding site. Residue Glu-233 is part of the active site. Residue His-250 is the Proton donor of the active site. Gly-253 contributes to the NAD(+) binding site. Tyr-254 contacts substrate.

The protein belongs to the D-isomer specific 2-hydroxyacid dehydrogenase family. PdxB subfamily. Homodimer.

The protein localises to the cytoplasm. The catalysed reaction is 4-phospho-D-erythronate + NAD(+) = (R)-3-hydroxy-2-oxo-4-phosphooxybutanoate + NADH + H(+). It participates in cofactor biosynthesis; pyridoxine 5'-phosphate biosynthesis; pyridoxine 5'-phosphate from D-erythrose 4-phosphate: step 2/5. In terms of biological role, catalyzes the oxidation of erythronate-4-phosphate to 3-hydroxy-2-oxo-4-phosphonooxybutanoate. This is Erythronate-4-phosphate dehydrogenase from Coxiella burnetii (strain Dugway 5J108-111).